Reading from the N-terminus, the 578-residue chain is Paraneoplastic antigen Ma6F (578 aa).

Disordered stretches follow at residues 106 to 221 (AQPQ…AGAA) and 441 to 578 (AAPV…PPGK). The span at 112-129 (AVARGAGEAGAAGEAGSV) shows a compositional bias: low complexity. Gly residues predominate over residues 147–159 (GGIGEAGGVGEAG). A compositionally biased stretch (low complexity) spans 160 to 173 (AAGEAGAAGEAGAA). Gly residues predominate over residues 174 to 211 (GEAGGAGEAGGAGEAGGAGEEGGTGEEGGAGEAGGAGE). The segment covering 449–461 (PAAAQASPAQGDA) has biased composition (low complexity). 2 stretches are compositionally biased toward acidic residues: residues 462 to 473 (SEADPGAEDADE) and 556 to 566 (EESENEDEDGA).

The chain is Paraneoplastic antigen Ma6F from Homo sapiens (Human).